The sequence spans 86 residues: Anti-adapter protein IraP (86 aa).

The stretch at methionine 1–methionine 36 forms a coiled coil.

Belongs to the IraP family. In terms of assembly, interacts with RssB.

The protein resides in the cytoplasm. In terms of biological role, inhibits RpoS proteolysis by regulating RssB activity, thereby increasing the stability of the sigma stress factor RpoS especially during phosphate starvation, but also in stationary phase and during nitrogen starvation. Its effect on RpoS stability is due to its interaction with RssB, which probably blocks the interaction of RssB with RpoS, and the consequent delivery of the RssB-RpoS complex to the ClpXP protein degradation pathway. This chain is Anti-adapter protein IraP, found in Shigella flexneri serotype 5b (strain 8401).